Reading from the N-terminus, the 169-residue chain is Sec-independent protein translocase protein TatB (169 aa).

The chain crosses the membrane as a helical span at residues 1-21 (MFDIGFLELAVIAVIGLIVIG). The segment at 98-169 (EAEEAKLQTP…TTKTEPANDR (72 aa)) is disordered. Residues 134 to 143 (PPEEPSKVEA) show a composition bias toward basic and acidic residues. Residues 146-169 (SAETPQANNQDQQPTTKTEPANDR) are compositionally biased toward polar residues.

Belongs to the TatB family. As to quaternary structure, the Tat system comprises two distinct complexes: a TatABC complex, containing multiple copies of TatA, TatB and TatC subunits, and a separate TatA complex, containing only TatA subunits. Substrates initially bind to the TatABC complex, which probably triggers association of the separate TatA complex to form the active translocon.

The protein localises to the cell inner membrane. Part of the twin-arginine translocation (Tat) system that transports large folded proteins containing a characteristic twin-arginine motif in their signal peptide across membranes. Together with TatC, TatB is part of a receptor directly interacting with Tat signal peptides. TatB may form an oligomeric binding site that transiently accommodates folded Tat precursor proteins before their translocation. The sequence is that of Sec-independent protein translocase protein TatB from Saccharophagus degradans (strain 2-40 / ATCC 43961 / DSM 17024).